The primary structure comprises 650 residues: MLLHINPAYLFKLLHGFPPWIMPTDGNLGDKNFQMGKPGHREGATMHVKKYLLKGLHRLQKGPGYTYKELLVWYCDNTNTHGPKRIICEGPKKKAMWFLLTLLFTALVCWQWGIFIRTYLSWEVSVSLSVGFKTMDFPAVTICNASPFKYSKIKHLLKDLDELMEAVLERILAPELSHANATRNLNFSIWNHTPLVLIDERNPHHPMVLDLFGDNHNGLTRSSASEKICNAHGCKMAMRLCSLNGTQCTFRNFTSATQAVTEWYILQATNIFAQVPQQELVEMSYPGEQMILACLFGAEPCNYRNFTSIFYPHYGNCYIFNWGMTEKALPSANPGTEFGLKLILDIGQEDYVPFLASTAGVRLMLHEQRSYPFIRDEGIYAMSGTETSIGVLVDKLQRMGEPYSPCTVNGSEVPVQNFYSDYNTTYSIQDFDWAHCYSDLQMSVAQRETCIGMCKESCNDTQYKMTISMADWPSEASEDWIFHVLSQERDQSTNITLSRKGIVKLNIYFQEFNYRTIEESAANNIVWLLSNLGGQFGFWMGGSVLCLIEFGEIIIDFVWITIIKLVALAKSLRQRRAQASYAGPPPTVAELVEAHTNFGFQPDTAPRSPNTGPYPNEQALPIPGTPPPNYDSLRLQPLDVIESDSEGDAI.

Residues 1–95 lie on the Cytoplasmic side of the membrane; it reads MLLHINPAYL…IICEGPKKKA (95 aa). Residues 96 to 116 form a helical membrane-spanning segment; sequence MWFLLTLLFTALVCWQWGIFI. The Extracellular segment spans residues 117–542; the sequence is RTYLSWEVSV…GGQFGFWMGG (426 aa). 5 disulfide bridges follow: Cys143-Cys317, Cys229-Cys234, Cys241-Cys248, Cys294-Cys301, and Cys406-Cys458. The N-linked (GlcNAc...) asparagine glycan is linked to Asn244. Asn305 is a glycosylation site (N-linked (GlcNAc...) asparagine). The helical transmembrane segment at 543–563 threads the bilayer; it reads SVLCLIEFGEIIIDFVWITII. Topologically, residues 564–650 are cytoplasmic; sequence KLVALAKSLR…IESDSEGDAI (87 aa). Positions 600–650 are disordered; it reads FQPDTAPRSPNTGPYPNEQALPIPGTPPPNYDSLRLQPLDVIESDSEGDAI. The short motif at 626–630 is the PY motif; recruits WW domain-containing proteins and is thereby required for ubiquitination and inhibition of the channel by NEDD4 and NEDD4L element; sequence PPPNY. Positions 641–650 are enriched in acidic residues; it reads IESDSEGDAI. 2 positions are modified to phosphoserine: Ser643 and Ser645.

This sequence belongs to the amiloride-sensitive sodium channel (TC 1.A.6) family. SCNN1B subfamily. As to quaternary structure, component of the heterotrimeric epithelial sodium channel (ENaC) composed of an alpha/SCNN1A, a beta/SCNN1B and a gamma/SCNN1G subunit. An additional delta/SCNN1D subunit can replace the alpha/SCNN1A subunit to form an alternative channel with specific properties. Interacts with WWP1 (via WW domains). Interacts with WWP2 (via WW domains); inhibits the channel. Interacts with the full-length immature form of PCSK9 (pro-PCSK9). Interacts (N-glycosylated) with BPIFA1; the interaction is direct and inhibits the proteolytic processing of SCNN1A and SCNN1G and the activation of ENaC. Post-translationally, ubiquitinated. Can be ubiquitinated at multiple sites and undergo monoubiquitination and polyubiquitination. Ubiquitination by NEDD4 or NEDD4L inhibits the ENaC channel through endocytosis, intracellular retention and degradation of its individual subunits. However, some studies could not confirm the ubiquitination of this subunit of the ENaC. Phosphorylated on serine and threonine residues. Aldosterone and insulin increase the basal level of phosphorylation. In terms of processing, N-glycosylated. N-glycosylation is required for interaction with BPIFA1.

The protein resides in the apical cell membrane. The protein localises to the cytoplasmic vesicle membrane. It catalyses the reaction Na(+)(in) = Na(+)(out). Originally identified and characterized by its inhibition by the diuretic drug amiloride. Functionally, this is one of the three pore-forming subunits of the heterotrimeric epithelial sodium channel (ENaC), a critical regulator of sodium balance and fluid homeostasis. ENaC operates in epithelial tissues, where it mediates the electrodiffusion of sodium ions from extracellular fluid through the apical membrane of cells, with water following osmotically. It plays a key role in maintaining sodium homeostasis through electrogenic sodium reabsorption in the kidneys. Additionally, ENaC is essential for airway surface liquid homeostasis, which is crucial for proper mucus clearance. The sequence is that of Epithelial sodium channel subunit beta from Pan troglodytes (Chimpanzee).